The chain runs to 225 residues: Cytidylate kinase (225 aa).

11-19 (GPAAAGKST) contributes to the ATP binding site.

Belongs to the cytidylate kinase family. Type 1 subfamily.

Its subcellular location is the cytoplasm. The enzyme catalyses CMP + ATP = CDP + ADP. It carries out the reaction dCMP + ATP = dCDP + ADP. This is Cytidylate kinase from Bacillus anthracis (strain A0248).